Here is a 155-residue protein sequence, read N- to C-terminus: Endoribonuclease YbeY (155 aa).

His-114, His-118, and His-124 together coordinate Zn(2+).

This sequence belongs to the endoribonuclease YbeY family. Zn(2+) serves as cofactor.

It is found in the cytoplasm. Single strand-specific metallo-endoribonuclease involved in late-stage 70S ribosome quality control and in maturation of the 3' terminus of the 16S rRNA. This is Endoribonuclease YbeY from Buchnera aphidicola subsp. Acyrthosiphon pisum (strain APS) (Acyrthosiphon pisum symbiotic bacterium).